The following is a 493-amino-acid chain: MHLEFEKAHDVLLEDVRDTVNIRQTHFSSPKRLANRWDHRLSDESLSQGASPLKNSVKTATTSVPIPLGVGRPASLFYPWQSMTMTGTKESNTRNPMTCNIGEAAFDISSALNYADPSGSTELVACFRENTRLIHNPPYQDWDTTLTCGSTSAIDIVLRMLCNRGDWILAEASTYTGTVMAAKAHGLNIQSIEMDEEGLLPVDLDNKLRYWDTSRSRKPFVLYTIPSGHNPTGITQSTARKAAIYQIAERHDLLVLEDDPYFFLRLDGSFSSLDINPPYSSFEKLRKSLPSSYLSLDKSGRVIRVDSTSKILAPGLRCGWLTASKQIVEIFENFAEVGPAPPSGPSQVMLYKLFVESWGQEGFANWLNHLSGEYKSRRDIMIAACSQHLPKGLCTWTTPTHGMFLWITIDLARHPDYSEKRENLSLDLEDKIYERAASYGVAVAKGSWFNVEACLDKVFFRITFVSTTCLDDLENGVKRLGAAVRDEFRFTQA.

The protein belongs to the class-I pyridoxal-phosphate-dependent aminotransferase family. Requires pyridoxal 5'-phosphate as cofactor.

It participates in mycotoxin biosynthesis. Functionally, aminotransferase; part of the gene cluster that mediates the biosynthesis of swainsonine (SW), a cytotoxic fungal alkaloid and a potential cancer therapy drug. Swainsonine production occurs via a multibranched pathway and is dispensable for fungal colonization of plants and infection of insect hosts. The first step of swainsonine biosynthesis is the production of the precursor pipecolic acid (PA) via conversion of L-lysine (Lys) to 1-piperideine-6-carboxylate (P6C) by the aminotransferase swnA, the latter being further reduced to PA by the reductase swnR. The PKS-NRPS hybrid synthetase swnK uptakes and condensates PA and malonyl-CoA with and without skipping of the ketoreductase (KR) domain in order to produce 3 intermediates, 1-oxoindolizidine, (1S)-1-hydroxyindolizin, and (1R)-1-hydroxyindolizine; with the transisomer (1S)-1-hydroxyindolizin being predominant. The terminal thioester reductase (TE) domain of swnK is involved in reduction of the thioester bond to release the intermediate aldehydes. The oxidoreductase swnN could contribute to the reduction of 1-oxoindolizidine to (1S)-1-hydroxyindolizin and (1R)-1-hydroxyindolizine, contributing to the major route of SW production. The dioxygenase swnH2 would be responsible for the oxidization of (1R)-1-hydroxyindolizine into (1R,2S)-1,2-dihydroxyindolizine and of (1S)-1-hydroxyindolizin to yield both (1R,2S)-1,2-dihydroxyindolizine and (1S,2S)-1,2-dihydroxyindolizine. The dioxygenase swnH1 then performs the conversion of the 1,2-dihydroxyindolizine epimers to SW. The polypeptide is Aminotransferase swnA (Arthroderma benhamiae (strain ATCC MYA-4681 / CBS 112371) (Trichophyton mentagrophytes)).